A 465-amino-acid chain; its full sequence is Na(+)-translocating NADH-quinone reductase subunit A (465 aa).

The protein belongs to the NqrA family. Composed of six subunits; NqrA, NqrB, NqrC, NqrD, NqrE and NqrF.

It carries out the reaction a ubiquinone + n Na(+)(in) + NADH + H(+) = a ubiquinol + n Na(+)(out) + NAD(+). Its function is as follows. NQR complex catalyzes the reduction of ubiquinone-1 to ubiquinol by two successive reactions, coupled with the transport of Na(+) ions from the cytoplasm to the periplasm. NqrA to NqrE are probably involved in the second step, the conversion of ubisemiquinone to ubiquinol. The sequence is that of Na(+)-translocating NADH-quinone reductase subunit A from Chlamydia trachomatis serovar L2b (strain UCH-1/proctitis).